We begin with the raw amino-acid sequence, 341 residues long: 4-(gamma-L-glutamylamino)butanoyl-[BtrI acyl-carrier protein] monooxygenase BtrO (341 aa).

The protein belongs to the bacterial luciferase oxidoreductase family.

It carries out the reaction 4-(gamma-L-glutamylamino)butanoyl-[BtrI ACP] + FMNH2 + O2 = 4-(gamma-L-glutamylamino)-(2S)-2-hydroxybutanoyl-[BtrI ACP] + FMN + H2O + H(+). It participates in antibiotic biosynthesis; butirosin biosynthesis. Monooxygenase component of a two-component system involved in the biosynthesis of the side chain of the aminoglycoside antibiotics in the biosynthetic pathway of butirosin. Together with BtrV, mediates hydroxylation of gamma-L-Glu-GABA-S-BtrI. Not able to hydroxylate free substrates, activation by the acyl-carrier protein is mandatory. Octanoyl-S-[BtrI acyl-carrier protein] is also accepted as substrate. This is 4-(gamma-L-glutamylamino)butanoyl-[BtrI acyl-carrier protein] monooxygenase BtrO (btrO) from Niallia circulans (Bacillus circulans).